The following is a 495-amino-acid chain: Serine/threonine-protein phosphatase 2A regulatory subunit sur-6 (495 aa).

The disordered stretch occupies residues 1–27; sequence MVMEVDEPAVAATTSQNQPQEHANDFD. Over residues 12–21 the composition is skewed to polar residues; it reads ATTSQNQPQE. WD repeat units follow at residues 64–103, 130–171, 215–253, 264–304, 323–361, and 378–419; these read TEAD…KYVK, EIDE…RKIG, AHTY…ESFN, ELTE…LCDA, EIIA…QPVE, and ENDS…DAKT. The interval 439–459 is disordered; that stretch reads SAKRKRNNLSSSGETTEEDLS. Residues 464-495 form a WD 7 repeat; sequence QFDRKILHTAWHPKDNIIALAATNNLYIFSDV.

It belongs to the phosphatase 2A regulatory subunit B family. As to quaternary structure, part of a complex consisting of a common heterodimeric core enzyme, composed of catalytic subunit let-92 and constant regulatory subunit paa-1, that associates with a variety of regulatory subunits which confer distinct properties to the holoenzyme. Interacts with let-92.

The protein resides in the cytoplasm. Its function is as follows. Probable regulatory subunit of serine/threonine phosphatase let-92. Together with let-92 and constant regulatory subunit paa-1, positively regulates centriole duplication during early embryonic cell divisions by preventing the degradation of sas-5 and kinase zyg-1. In addition, during vulva development, may play a role with phosphatase let-92 and regulatory subunit paa-1 in the induction of vulva cell precursors by positively regulating let-60/Ras-MAP kinase signaling, probably by promoting lin-45 activation. In intestinal epithelial cells, may play a role in the late secretory pathway probably by regulating the exocyst, a protein complex involved in targeting secretory vesicles to the plasma membrane. The polypeptide is Serine/threonine-protein phosphatase 2A regulatory subunit sur-6 (Caenorhabditis elegans).